Reading from the N-terminus, the 715-residue chain is Lanosterol synthase erg7B (715 aa).

A PFTB 1 repeat occupies 111–153 (AIEIKNYLMARANPVDGGWGLHSEGDSSVFGTSLNYTVLRLLG). Aspartate 445 serves as the catalytic Proton donor. 2 PFTB repeats span residues 550–590 (IQRG…RSAG) and 599–640 (VRRG…VVQT).

This sequence belongs to the terpene cyclase/mutase family.

Its subcellular location is the lipid droplet. The protein resides in the endoplasmic reticulum membrane. It carries out the reaction (S)-2,3-epoxysqualene = lanosterol. It functions in the pathway steroid metabolism; ergosterol biosynthesis. In terms of biological role, lanosterol synthase; part of the third module of ergosterol biosynthesis pathway that includes the late steps of the pathway. ERG7A and ERG7B catalyze the cyclization of (S)-2,3 oxidosqualene to lanosterol, a reaction that forms the sterol core. The third module or late pathway involves the ergosterol synthesis itself through consecutive reactions that mainly occur in the endoplasmic reticulum (ER) membrane. Firstly, the squalene synthase erg9 catalyzes the condensation of 2 farnesyl pyrophosphate moieties to form squalene, which is the precursor of all steroids. Squalene synthase is crucial for balancing the incorporation of farnesyl diphosphate (FPP) into sterol and nonsterol isoprene synthesis. Secondly, squalene is converted into lanosterol by the consecutive action of the squalene epoxidase erg1 and the lanosterol synthase erg7. Then, the delta(24)-sterol C-methyltransferase erg6 methylates lanosterol at C-24 to produce eburicol. Eburicol is the substrate of the sterol 14-alpha demethylase encoded by cyp51A and cyp51B, to yield 4,4,24-trimethyl ergosta-8,14,24(28)-trienol. The C-14 reductase erg24 then reduces the C14=C15 double bond which leads to 4,4-dimethylfecosterol. A sequence of further demethylations at C-4, involving the C-4 demethylation complex containing the C-4 methylsterol oxidases erg25A or erg25B, the sterol-4-alpha-carboxylate 3-dehydrogenase erg26 and the 3-keto-steroid reductase erg27, leads to the production of fecosterol via 4-methylfecosterol. The C-8 sterol isomerase erg2 then catalyzes the reaction which results in unsaturation at C-7 in the B ring of sterols and thus converts fecosterol to episterol. The sterol-C5-desaturase erg3B then catalyzes the introduction of a C-5 double bond in the B ring to produce 5-dehydroepisterol. The 2 other sterol-C5-desaturases, erg3A and erg3C, seem to be less important in ergosterol biosynthesis. The C-22 sterol desaturase erg5 further converts 5-dehydroepisterol into ergosta-5,7,22,24(28)-tetraen-3beta-ol by forming the C-22(23) double bond in the sterol side chain. Finally, ergosta-5,7,22,24(28)-tetraen-3beta-ol is substrate of the C-24(28) sterol reductases erg4A and erg4B to produce ergosterol. Possible alternative sterol biosynthetic pathways might exist from fecosterol to ergosterol, depending on the activities of the erg3 isoforms. The polypeptide is Lanosterol synthase erg7B (Aspergillus fumigatus (strain ATCC MYA-4609 / CBS 101355 / FGSC A1100 / Af293) (Neosartorya fumigata)).